The following is a 35-amino-acid chain: Dermonecrotic toxin LdSicTox-alpha-1 (35 aa).

H11 is a catalytic residue. 2 residues coordinate Mg(2+): E31 and D33.

Belongs to the arthropod phospholipase D family. Class I subfamily. The cofactor is Mg(2+). In terms of processing, contains 1 disulfide bond. In terms of tissue distribution, expressed by the venom gland.

Its subcellular location is the secreted. It carries out the reaction an N-(acyl)-sphingosylphosphocholine = an N-(acyl)-sphingosyl-1,3-cyclic phosphate + choline. The enzyme catalyses an N-(acyl)-sphingosylphosphoethanolamine = an N-(acyl)-sphingosyl-1,3-cyclic phosphate + ethanolamine. It catalyses the reaction a 1-acyl-sn-glycero-3-phosphocholine = a 1-acyl-sn-glycero-2,3-cyclic phosphate + choline. The catalysed reaction is a 1-acyl-sn-glycero-3-phosphoethanolamine = a 1-acyl-sn-glycero-2,3-cyclic phosphate + ethanolamine. Its function is as follows. Dermonecrotic toxins cleave the phosphodiester linkage between the phosphate and headgroup of certain phospholipids (sphingolipid and lysolipid substrates), forming an alcohol (often choline) and a cyclic phosphate. This toxin acts on sphingomyelin (SM). It may also act on ceramide phosphoethanolamine (CPE), lysophosphatidylcholine (LPC) and lysophosphatidylethanolamine (LPE), but not on lysophosphatidylserine (LPS), and lysophosphatidylglycerol (LPG). It acts by transphosphatidylation, releasing exclusively cyclic phosphate products as second products. Induces dermonecrosis, hemolysis, increased vascular permeability, edema, inflammatory response, and platelet aggregation. The chain is Dermonecrotic toxin LdSicTox-alpha-1 from Loxosceles deserta (Desert recluse spider).